A 705-amino-acid polypeptide reads, in one-letter code: UvrABC system protein C (705 aa).

Residues Glu-16–Val-95 form the GIY-YIG domain. The UVR domain occupies Gly-208–Ala-243. A compositionally biased stretch (low complexity) spans Ala-315–Ser-332. Disordered stretches follow at residues Ala-315–Glu-335 and Arg-683–Ser-705.

Belongs to the UvrC family. In terms of assembly, interacts with UvrB in an incision complex.

The protein localises to the cytoplasm. Functionally, the UvrABC repair system catalyzes the recognition and processing of DNA lesions. UvrC both incises the 5' and 3' sides of the lesion. The N-terminal half is responsible for the 3' incision and the C-terminal half is responsible for the 5' incision. The chain is UvrABC system protein C from Frankia casuarinae (strain DSM 45818 / CECT 9043 / HFP020203 / CcI3).